The primary structure comprises 308 residues: Probable 5-dehydro-4-deoxyglucarate dehydratase (308 aa).

The protein belongs to the DapA family.

It catalyses the reaction 5-dehydro-4-deoxy-D-glucarate + H(+) = 2,5-dioxopentanoate + CO2 + H2O. Its pathway is carbohydrate acid metabolism; D-glucarate degradation; 2,5-dioxopentanoate from D-glucarate: step 2/2. In Bacillus licheniformis (strain ATCC 14580 / DSM 13 / JCM 2505 / CCUG 7422 / NBRC 12200 / NCIMB 9375 / NCTC 10341 / NRRL NRS-1264 / Gibson 46), this protein is Probable 5-dehydro-4-deoxyglucarate dehydratase.